Here is a 360-residue protein sequence, read N- to C-terminus: POU domain, class 5, transcription factor 1 (360 aa).

2 disordered regions span residues 1–48 and 86–137; these read MAGH…SGIG and PPGG…EESQ. Positions 4-12 match the 9aaTAD motif; it reads HLASDFAFS. S111 bears the Phosphoserine; by MAPK mark. A Glycyl lysine isopeptide (Lys-Gly) (interchain with G-Cter in SUMO) cross-link involves residue K123. Positions 123–137 are enriched in basic and acidic residues; that stretch reads KLDKEKLEPNPEESQ. The 75-residue stretch at 138-212 folds into the POU-specific domain; that stretch reads DIKALQKDLE…LLQKWVEEAD (75 aa). 2 residues coordinate DNA: R157 and Q164. 2 DNA-binding regions span residues 180–186 and 193–196; these read SQTTICR and SFKN. The segment at residues 230–289 is a DNA-binding region (homeobox); the sequence is RKRKRTSIENRVRGNLESMFLQCPKPTLQQISHIAQQLGLEKDVVRVWFCNRRQKGKRSS. T235 carries the phosphothreonine modification. Residues S236, S289, S290, and S355 each carry the phosphoserine modification. Residues 287–322 form a disordered region; sequence RSSSDYSQREDFEAAGSPFTGGPVSSPLAPGPHFGT.

Belongs to the POU transcription factor family. Class-5 subfamily. Interacts with PKM. Interacts with WWP2. Interacts with UBE2I and ZSCAN10. Interacts with PCGF1. Interacts with ESRRB; recruits ESRRB near the POU5F1-SOX2 element in the NANOG proximal promoter; the interaction is DNA independent. Interacts with MAPK8 and MAPK9; the interaction allows MAPK8 and MAPK9 to phosphorylate POU5F1 on Ser-355. Interacts (when phosphorylated on Ser-355) with FBXW8. Interacts with FBXW4. Interacts with SOX2 and SOX15; binds synergistically with either SOX2 or SOX15 to DNA. Interacts with DDX56. Sumoylation enhances the protein stability, DNA binding and transactivation activity. Sumoylation is required for enhanced YES1 expression. Post-translationally, ubiquitinated; undergoes 'Lys-63'-linked polyubiquitination by WWP2 leading to proteasomal degradation. In terms of processing, ERK1/2-mediated phosphorylation at Ser-111 promotes nuclear exclusion and proteasomal degradation. Phosphorylation at Thr-235 and Ser-236 decrease DNA-binding and alters ability to activate transcription. Expressed in immature oocytes.

The protein resides in the cytoplasm. It is found in the nucleus. Its function is as follows. Transcription factor that binds to the octamer motif (5'-ATTTGCAT-3'). Forms a trimeric complex with SOX2 or SOX15 on DNA and controls the expression of a number of genes involved in embryonic development such as YES1, FGF4, UTF1 and ZFP206. Critical for early embryogenesis and for embryonic stem cell pluripotency. This Bos taurus (Bovine) protein is POU domain, class 5, transcription factor 1 (POU5F1).